We begin with the raw amino-acid sequence, 244 residues long: Ribonuclease 3 (244 aa).

The region spanning 5-136 (LAELERAIGI…LVGAIYLDQG (132 aa)) is the RNase III domain. A Mg(2+)-binding site is contributed by Glu-49. The active site involves Asp-53. Residues Asp-122 and Glu-125 each coordinate Mg(2+). The active site involves Glu-125. In terms of domain architecture, DRBM spans 161 to 229 (DPTTRLQELM…ARKALAAWDK (69 aa)).

It belongs to the ribonuclease III family. Homodimer. Mg(2+) is required as a cofactor.

It is found in the cytoplasm. It catalyses the reaction Endonucleolytic cleavage to 5'-phosphomonoester.. In terms of biological role, digests double-stranded RNA. Involved in the processing of primary rRNA transcript to yield the immediate precursors to the large and small rRNAs (23S and 16S). Processes some mRNAs, and tRNAs when they are encoded in the rRNA operon. Processes pre-crRNA and tracrRNA of type II CRISPR loci if present in the organism. In Chloroflexus aurantiacus (strain ATCC 29364 / DSM 637 / Y-400-fl), this protein is Ribonuclease 3.